Consider the following 204-residue polypeptide: N-(5'-phosphoribosyl)anthranilate isomerase (204 aa).

It belongs to the TrpF family.

It catalyses the reaction N-(5-phospho-beta-D-ribosyl)anthranilate = 1-(2-carboxyphenylamino)-1-deoxy-D-ribulose 5-phosphate. Its pathway is amino-acid biosynthesis; L-tryptophan biosynthesis; L-tryptophan from chorismate: step 3/5. This is N-(5'-phosphoribosyl)anthranilate isomerase from Pseudomonas fluorescens (strain Pf0-1).